Consider the following 107-residue polypeptide: UPF0145 protein PC1_1703 (107 aa).

This sequence belongs to the UPF0145 family.

This chain is UPF0145 protein PC1_1703, found in Pectobacterium carotovorum subsp. carotovorum (strain PC1).